Reading from the N-terminus, the 193-residue chain is Cysteine and glycine-rich protein 1 (193 aa).

The LIM zinc-binding 1 domain maps to C10–C61. Positions K64–K69 match the Nuclear localization signal motif. A Phosphoserine modification is found at S81. N6-acetyllysine occurs at positions 84, 112, 131, 137, and 161. Positions C119–C170 constitute an LIM zinc-binding 2 domain. S192 carries the post-translational modification Phosphoserine.

As to quaternary structure, interacts with ASCC1; ASCC2 and TRIP4.

Its subcellular location is the nucleus. In terms of biological role, could play a role in neuronal development. This Bos taurus (Bovine) protein is Cysteine and glycine-rich protein 1 (CSRP1).